The sequence spans 302 residues: 1D-myo-inositol 2-acetamido-2-deoxy-alpha-D-glucopyranoside deacetylase (302 aa).

Residues His13, Asp16, and His155 each contribute to the Zn(2+) site.

It belongs to the MshB deacetylase family. The cofactor is Zn(2+).

It catalyses the reaction 1D-myo-inositol 2-acetamido-2-deoxy-alpha-D-glucopyranoside + H2O = 1D-myo-inositol 2-amino-2-deoxy-alpha-D-glucopyranoside + acetate. In terms of biological role, catalyzes the deacetylation of 1D-myo-inositol 2-acetamido-2-deoxy-alpha-D-glucopyranoside (GlcNAc-Ins) in the mycothiol biosynthesis pathway. The polypeptide is 1D-myo-inositol 2-acetamido-2-deoxy-alpha-D-glucopyranoside deacetylase (Nocardioides sp. (strain ATCC BAA-499 / JS614)).